The following is a 64-amino-acid chain: Translational regulator CsrA (64 aa).

This sequence belongs to the CsrA/RsmA family. Homodimer; the beta-strands of each monomer intercalate to form a hydrophobic core, while the alpha-helices form wings that extend away from the core.

Its subcellular location is the cytoplasm. Its function is as follows. A key translational regulator that binds mRNA to regulate translation initiation and/or mRNA stability. Mediates global changes in gene expression, shifting from rapid growth to stress survival by linking envelope stress, the stringent response and the catabolite repression systems. Usually binds in the 5'-UTR; binding at or near the Shine-Dalgarno sequence prevents ribosome-binding, repressing translation, binding elsewhere in the 5'-UTR can activate translation and/or stabilize the mRNA. Its function is antagonized by small RNA(s). In Thioalkalivibrio sulfidiphilus (strain HL-EbGR7), this protein is Translational regulator CsrA.